The chain runs to 216 residues: Probable transaldolase (216 aa).

The active-site Schiff-base intermediate with substrate is the K83.

This sequence belongs to the transaldolase family. Type 3B subfamily.

The protein localises to the cytoplasm. The enzyme catalyses D-sedoheptulose 7-phosphate + D-glyceraldehyde 3-phosphate = D-erythrose 4-phosphate + beta-D-fructose 6-phosphate. The protein operates within carbohydrate degradation; pentose phosphate pathway; D-glyceraldehyde 3-phosphate and beta-D-fructose 6-phosphate from D-ribose 5-phosphate and D-xylulose 5-phosphate (non-oxidative stage): step 2/3. Functionally, transaldolase is important for the balance of metabolites in the pentose-phosphate pathway. The polypeptide is Probable transaldolase (Sorangium cellulosum (strain So ce56) (Polyangium cellulosum (strain So ce56))).